The chain runs to 86 residues: YcgL domain-containing protein XCV4171 (86 aa).

Residues 1 to 83 (MHAYVYKSQR…PKTIVLAGEC (83 aa)) form the YcgL domain.

In Xanthomonas euvesicatoria pv. vesicatoria (strain 85-10) (Xanthomonas campestris pv. vesicatoria), this protein is YcgL domain-containing protein XCV4171.